A 443-amino-acid chain; its full sequence is Mitochondrial enolase superfamily member 1 (443 aa).

Substrate contacts are provided by residues 24–26 and Tyr-34; that span reads GSD. A Phosphoserine modification is found at Ser-148. Position 220 (Lys-220) interacts with substrate. The Proton donor/acceptor role is filled by Lys-222. Asp-250 provides a ligand contact to Mg(2+). Substrate-binding positions include Asn-252, Glu-276, Glu-305, 355 to 357, and Glu-386; that span reads HAG. Mg(2+)-binding residues include Glu-276 and Glu-305. Residue His-355 is part of the active site.

It belongs to the mandelate racemase/muconate lactonizing enzyme family. ENOSF1 subfamily. Requires Mg(2+) as cofactor. Could be sumoylated.

Its subcellular location is the mitochondrion. It catalyses the reaction L-fuconate = 2-dehydro-3-deoxy-L-fuconate + H2O. Its function is as follows. Plays a role in the catabolism of L-fucose, a sugar that is part of the carbohydrates that are attached to cellular glycoproteins. Catalyzes the dehydration of L-fuconate to 2-keto-3-deoxy-L-fuconate by the abstraction of the 2-proton to generate an enediolate intermediate that is stabilized by the magnesium ion. May down-regulate thymidylate synthase activity, possibly already at the RNA level, by promoting the degradation of TYMS mRNA via an antisense RNA-based mechanism. The protein is Mitochondrial enolase superfamily member 1 (ENOSF1) of Pongo abelii (Sumatran orangutan).